We begin with the raw amino-acid sequence, 520 residues long: Cytochrome P450 4F8 (520 aa).

A helical transmembrane segment spans residues 15-37; sequence AASPWLLLLVVGASWLLARILAW. C468 is a binding site for heme.

It belongs to the cytochrome P450 family. Requires heme as cofactor. Expressed in the epithelium of seminal vesicles, in renal cortex, in adult and fetal liver, in epidermis, in corneal epithelium, in sweat glands, hair follicles, epithelial linings of the ampulla of vas deferens and of the stomach and small intestine, as well as in the transitional epithelium of the bladder and ureter (at protein level). In the epidermis, expressed from the basal cell to the granular cell layers. In the corneal epithelium, expressed in all cell layers. Also detected in prostate. Up-regulated in the epidermis of psoriatic lesions.

The protein resides in the endoplasmic reticulum membrane. Its subcellular location is the microsome membrane. The enzyme catalyses an organic molecule + reduced [NADPH--hemoprotein reductase] + O2 = an alcohol + oxidized [NADPH--hemoprotein reductase] + H2O + H(+). It catalyses the reaction (5Z,8Z,11Z,14Z)-eicosatetraenoate + reduced [NADPH--hemoprotein reductase] + O2 = (18R)-hydroxy-(5Z,8Z,11Z,14Z)-eicosatetraenoate + oxidized [NADPH--hemoprotein reductase] + H2O + H(+). It carries out the reaction (4Z,7Z,10Z,13Z,16Z)-docosapentaenoate + reduced [NADPH--hemoprotein reductase] + O2 = 20-hydroxy-(4Z,7Z,10Z,13Z,16Z)-docosapentaenoate + oxidized [NADPH--hemoprotein reductase] + H2O + H(+). The catalysed reaction is prostaglandin H1 + reduced [NADPH--hemoprotein reductase] + O2 = 19-hydroxyprostaglandin H1 + oxidized [NADPH--hemoprotein reductase] + H2O + H(+). The enzyme catalyses prostaglandin H2 + reduced [NADPH--hemoprotein reductase] + O2 = 19-hydroxyprostaglandin H2 + oxidized [NADPH--hemoprotein reductase] + H2O + H(+). It catalyses the reaction prostaglandin I2 + reduced [NADPH--hemoprotein reductase] + O2 = 19-hydroxy-prostaglandin I2 + oxidized [NADPH--hemoprotein reductase] + H2O + H(+). It carries out the reaction (4Z,7Z,10Z,13Z,16Z,19Z)-docosahexaenoate + reduced [NADPH--hemoprotein reductase] + O2 = 10,11-epoxy-(4Z,7Z,13Z,16Z,19Z)-docosapentaenoate + oxidized [NADPH--hemoprotein reductase] + H2O + H(+). The catalysed reaction is (4Z,7Z,10Z,13Z,16Z,19Z)-docosahexaenoate + reduced [NADPH--hemoprotein reductase] + O2 = 13,14-epoxy-(4Z,7Z,10Z,16Z,19Z)-docosapentaenoate + oxidized [NADPH--hemoprotein reductase] + H2O + H(+). The enzyme catalyses (4Z,7Z,10Z,13Z,16Z,19Z)-docosahexaenoate + reduced [NADPH--hemoprotein reductase] + O2 = 16,17-epoxy-(4Z,7Z,10Z,13Z,19Z)-docosapentaenoate + oxidized [NADPH--hemoprotein reductase] + H2O + H(+). It catalyses the reaction (4Z,7Z,10Z,13Z,16Z,19Z)-docosahexaenoate + reduced [NADPH--hemoprotein reductase] + O2 = 19,20-epoxy-(4Z,7Z,10Z,13Z,16Z)-docosapentaenoate + oxidized [NADPH--hemoprotein reductase] + H2O + H(+). It carries out the reaction (7Z,10Z,13Z,16Z,19Z)-docosapentaenoate + reduced [NADPH--hemoprotein reductase] + O2 = 10,11-epoxy-(7Z,13Z,16Z,19Z)-docosatetraenoate + oxidized [NADPH--hemoprotein reductase] + H2O + H(+). The catalysed reaction is (7Z,10Z,13Z,16Z,19Z)-docosapentaenoate + reduced [NADPH--hemoprotein reductase] + O2 = 13,14-epoxy-(7Z,10Z,16Z,19Z)-docosatetraenoate + oxidized [NADPH--hemoprotein reductase] + H2O + H(+). The enzyme catalyses (7Z,10Z,13Z,16Z,19Z)-docosapentaenoate + reduced [NADPH--hemoprotein reductase] + O2 = 16,17-epoxy-(7Z,10Z,13Z,19Z)-docosatetraenoate + oxidized [NADPH--hemoprotein reductase] + H2O + H(+). It catalyses the reaction (7Z,10Z,13Z,16Z,19Z)-docosapentaenoate + reduced [NADPH--hemoprotein reductase] + O2 = 19,20-epoxy-(7Z,10Z,13Z,16Z)-docosatetraenoate + oxidized [NADPH--hemoprotein reductase] + H2O + H(+). It functions in the pathway lipid metabolism; fatty acid metabolism. Functionally, a cytochrome P450 monooxygenase involved in the metabolism of endogenous polyunsaturated fatty acids (PUFAs) and their oxygenated derivatives (oxylipins). Mechanistically, uses molecular oxygen inserting one oxygen atom into a substrate, and reducing the second into a water molecule, with two electrons provided by NADPH via cytochrome P450 reductase (CPR; NADPH-ferrihemoprotein reductase). Catalyzes the hydroxylation of carbon hydrogen bonds, with preference for omega-1 and omega-2 positions. Hydroxylates (5Z,8Z,11Z,14Z)-eicosatetraenoic acid (arachidonate) predominantly at omega-2 position to form (18R)-hydroxyeicosatetraenoic acid (18R-HETE). Exhibits omega-1 hydroxylase activity toward prostaglandin (PG) H1, PGH2 and PGI2. Catalyzes the epoxidation of double bonds of PUFAs, including docosahexaenoic and docosapentaenoic acids. Shows little activity against PGD2, PGE1, PGE2, PGF2alpha, and leukotriene B4. The sequence is that of Cytochrome P450 4F8 from Homo sapiens (Human).